The primary structure comprises 246 residues: Acetoacetate decarboxylase (246 aa).

The active-site Schiff-base intermediate with acetoacetate is lysine 115.

Belongs to the ADC family.

It carries out the reaction acetoacetate + H(+) = acetone + CO2. Functionally, catalyzes the conversion of acetoacetate to acetone and carbon dioxide. This is Acetoacetate decarboxylase from Clostridium beijerinckii (Clostridium MP).